The following is a 450-amino-acid chain: Glucose-6-phosphate isomerase (450 aa).

Threonine 39 bears the Phosphothreonine mark. Glutamate 291 functions as the Proton donor in the catalytic mechanism. Active-site residues include histidine 312 and lysine 426.

This sequence belongs to the GPI family.

It localises to the cytoplasm. The enzyme catalyses alpha-D-glucose 6-phosphate = beta-D-fructose 6-phosphate. Its pathway is carbohydrate biosynthesis; gluconeogenesis. The protein operates within carbohydrate degradation; glycolysis; D-glyceraldehyde 3-phosphate and glycerone phosphate from D-glucose: step 2/4. Catalyzes the reversible isomerization of glucose-6-phosphate to fructose-6-phosphate. In Bacillus cereus (strain ATCC 10987 / NRS 248), this protein is Glucose-6-phosphate isomerase.